A 1483-amino-acid polypeptide reads, in one-letter code: Heme-responsive zinc finger transcription factor HAP1 (1483 aa).

A compositionally biased stretch (polar residues) spans 1–50 (MSNTPYNSSVPSIASMTQSSVSRSPNMHTATTPGANTSSNSPPLHMSSDS). The disordered stretch occupies residues 1-56 (MSNTPYNSSVPSIASMTQSSVSRSPNMHTATTPGANTSSNSPPLHMSSDSSKIKRK). Zn(2+) contacts are provided by Cys64, Cys67, Cys74, Cys81, Cys84, and Cys93. The zn(2)-C6 fungal-type DNA-binding region spans 64–93 (CTICRKRKVKCDKLRPHCQQCTKTGVAHLC). The stretch at 105–134 (EKELLKDNELKKLRERVKSLEKTLSKVHSS) forms a coiled coil. The tract at residues 126 to 208 (KTLSKVHSSP…ANSSSLSISN (83 aa)) is disordered. Positions 130–142 (KVHSSPSSNSLKS) are enriched in low complexity. Polar residues-rich tracts occupy residues 143–152 (YNTPESSNLF) and 160–176 (TLVN…SHMH). Positions 177 to 208 (QQQQQQQQQEQQQDFSRSANANANSSSLSISN) are enriched in low complexity. The segment at 244–444 (KGDPYLKLLW…NTIPHHQPQS (201 aa)) is heme-responsive; required for HMC formation. 6 HRM repeats span residues 280-285 (KCPINH), 299-304 (KCPVDH), 323-328 (KCPVDH), 347-352 (RCPVDH), 389-394 (KCPVDH), and 415-420 (RCPIDH). Composition is skewed to polar residues over residues 432–447 (STHN…SGSH) and 706–734 (QLNA…NPTL). Disordered stretches follow at residues 432–458 (STHN…NRKH) and 706–767 (QLNA…KENQ). Over residues 735-759 (NNNMSAATTNSSSRSGSADSRSGSN) the composition is skewed to low complexity. An HRM 7 repeat occupies 1192–1197 (KCPVYQ).

Binds DNA as a homodimer. Interacts with SRO9 and YDJ1. In the absence of heme, binds to at least four cellular proteins, including YDJ1 and SRO9, forming a high-molecular-weight complex (HMC) which results in repression of its activity and dictates its DNA-binding specificity.

Its subcellular location is the nucleus. Its function is as follows. Regulation of oxygen dependent gene expression. It modulates the expression of Iso-1 (CYP1) and Iso-2 (CYP3) cytochrome c. In response to heme, promotes transcription of genes encoding functions required for respiration, controlling oxidative damage and repression of anaerobic genes. Binds to the sequence 5'-CGGNNNTNNCGG-3'. In Saccharomyces cerevisiae (strain Lalvin EC1118 / Prise de mousse) (Baker's yeast), this protein is Heme-responsive zinc finger transcription factor HAP1 (HAP1).